We begin with the raw amino-acid sequence, 152 residues long: Large ribosomal subunit protein uL15 (152 aa).

Positions 1–13 (MLTLGNLSPQEGS) are enriched in polar residues. The tract at residues 1 to 62 (MLTLGNLSPQ…GGQMPLQRRL (62 aa)) is disordered. The segment covering 31–40 (TAGRGHKGFK) has biased composition (basic residues).

This sequence belongs to the universal ribosomal protein uL15 family. Part of the 50S ribosomal subunit.

Functionally, binds to the 23S rRNA. The chain is Large ribosomal subunit protein uL15 from Desulfotalea psychrophila (strain LSv54 / DSM 12343).